The primary structure comprises 288 residues: ATP synthase gamma chain (288 aa).

Belongs to the ATPase gamma chain family. F-type ATPases have 2 components, CF(1) - the catalytic core - and CF(0) - the membrane proton channel. CF(1) has five subunits: alpha(3), beta(3), gamma(1), delta(1), epsilon(1). CF(0) has three main subunits: a, b and c.

It is found in the cell inner membrane. Its function is as follows. Produces ATP from ADP in the presence of a proton gradient across the membrane. The gamma chain is believed to be important in regulating ATPase activity and the flow of protons through the CF(0) complex. The chain is ATP synthase gamma chain from Trichlorobacter lovleyi (strain ATCC BAA-1151 / DSM 17278 / SZ) (Geobacter lovleyi).